The following is a 481-amino-acid chain: uncharacterized protein (481 aa).

A disordered region spans residues 1–28 (MPQSNHYSHQSRSHNDRRRQQPDEKVQA). The TRAM domain maps to 29–87 (TVNIGQRFPLTIRRLGINGEGIGYYKHVITFVKGALPEEVVVAEVTAVHPRYLEAKIRS). S-adenosyl-L-methionine is bound by residues Gln313, Tyr342, Asp363, and Asp411. The active-site Nucleophile is Cys438.

This sequence belongs to the class I-like SAM-binding methyltransferase superfamily. RNA M5U methyltransferase family.

This is an uncharacterized protein from Lactiplantibacillus plantarum (strain ATCC BAA-793 / NCIMB 8826 / WCFS1) (Lactobacillus plantarum).